The following is a 382-amino-acid chain: Probable purine permease 4 (382 aa).

The next 10 helical transmembrane spans lie at 25-45, 62-82, 98-118, 121-141, 150-170, 185-205, 224-244, 260-280, 291-311, and 315-335; these read LTLL…SSLL, WVQS…HYVL, LIFS…FSWG, YLPV…TLIL, ITFS…LLAL, YFIG…YLPV, LVME…EGGF, TFYW…SFAA, ITGG…GVVA, and VFGG…SSYT. The EamA domain maps to 66 to 170; the sequence is AGFPLLLILI…LTLSSVLLAL (105 aa). Residues 345 to 364 are disordered; sequence EEKEKGEYSGVKTTEDSGEM.

It belongs to the purine permeases (TC 2.A.7.14) family.

The protein resides in the membrane. This is Probable purine permease 4 (PUP4) from Arabidopsis thaliana (Mouse-ear cress).